A 239-amino-acid polypeptide reads, in one-letter code: Small ribosomal subunit protein uS2 (239 aa).

It belongs to the universal ribosomal protein uS2 family.

In Francisella tularensis subsp. tularensis (strain FSC 198), this protein is Small ribosomal subunit protein uS2.